Here is a 517-residue protein sequence, read N- to C-terminus: Protein disulfide-isomerase A5 (517 aa).

A signal peptide spans 1–21 (MARAWGLLLAIGVILPTWLSS). Intrachain disulfides connect Cys83/Cys92, Cys180/Cys183, Cys303/Cys306, and Cys424/Cys427. Thioredoxin domains lie at 132-259 (FLKD…NPQP), 268-382 (PWAD…NPEA), and 376-504 (WMQN…TLRE). Positions 514 to 517 (REDL) match the Prevents secretion from ER motif.

Belongs to the protein disulfide isomerase family.

It is found in the endoplasmic reticulum lumen. It catalyses the reaction Catalyzes the rearrangement of -S-S- bonds in proteins.. The chain is Protein disulfide-isomerase A5 (Pdia5) from Rattus norvegicus (Rat).